We begin with the raw amino-acid sequence, 388 residues long: MNLHEYQGKQIFAKYKLPVSQGIACKTADEAVEAIKQLKGDAWAIKCQVHAGGRGKAGGVKLVRNEAEVREFADKWLGKRLVTFQTDANGQPVNTLYVEETAGIARELYLGAVIDRSSQKVVFMASSAGGMNIEEVAAKTPELLHKVAIDPLVGGMAYQGRELAFKLGLTGDQIKQFSFIFTQLAKLFVEKDLSLLEINPLVVTTEGNLLCLDAKMVVDGNALYRQPELAAMHDPSQDDPREALAESHQLNYVALDGNIGCMVNGAGLAMGTMDIVKLHGGFPANFLDVGGGATKERVAEAFKIILSDKAVKAVLVNIFGGIVRCDLIADGIIAAVNEVGVNVPVVVRLEGNNAELGREILAKSGLNIIAAATLTDAAVEAVKAAGGK.

Positions 9–244 (KQIFAKYKLP…PSQDDPREAL (236 aa)) constitute an ATP-grasp domain. ATP is bound by residues K46, 53–55 (GRG), E99, A102, and E107. Residues N199 and D213 each contribute to the Mg(2+) site. Residues N264 and 321 to 323 (GIV) contribute to the substrate site.

Belongs to the succinate/malate CoA ligase beta subunit family. Heterotetramer of two alpha and two beta subunits. Mg(2+) is required as a cofactor.

It carries out the reaction succinate + ATP + CoA = succinyl-CoA + ADP + phosphate. The enzyme catalyses GTP + succinate + CoA = succinyl-CoA + GDP + phosphate. The protein operates within carbohydrate metabolism; tricarboxylic acid cycle; succinate from succinyl-CoA (ligase route): step 1/1. In terms of biological role, succinyl-CoA synthetase functions in the citric acid cycle (TCA), coupling the hydrolysis of succinyl-CoA to the synthesis of either ATP or GTP and thus represents the only step of substrate-level phosphorylation in the TCA. The beta subunit provides nucleotide specificity of the enzyme and binds the substrate succinate, while the binding sites for coenzyme A and phosphate are found in the alpha subunit. This Glaesserella parasuis serovar 5 (strain SH0165) (Haemophilus parasuis) protein is Succinate--CoA ligase [ADP-forming] subunit beta.